A 344-amino-acid polypeptide reads, in one-letter code: MIKLEKISKIFDVSGKKLTALDNVSLHVPKGQICGVIGASGAGKSTLIRCVNLLETPSSGAVIVDGKDLTQLKNADLVHERRHIGMIFQHFNLLTSRTVFGNIALPLELENTPKEKIHQKVNELLALVGLTDKKDAYPSNLSGGQKQRVAIARALASEPKVLLCDEATSALDPATTQSILTLLKEINRTLGITILLITHEMEVVKRICDHVAVIDKGRLIEQGSVSEIFSNPQTQLAKEFIRSTFHISLPEEYMEKLTETPRNATSWPIVKFEFTGRTVDAPVLSQASKMFGVDLSILTSQIDYAGGVKFGFVIAEMEGDDEAITRTKTYLMEHNVKVEVLGYV.

Residues 2 to 241 (IKLEKISKIF…PQTQLAKEFI (240 aa)) enclose the ABC transporter domain. 38 to 45 (GASGAGKS) contributes to the ATP binding site.

This sequence belongs to the ABC transporter superfamily. Methionine importer (TC 3.A.1.24) family. In terms of assembly, the complex is composed of two ATP-binding proteins (MetN), two transmembrane proteins (MetI) and a solute-binding protein (MetQ).

The protein resides in the cell inner membrane. It catalyses the reaction L-methionine(out) + ATP + H2O = L-methionine(in) + ADP + phosphate + H(+). The catalysed reaction is D-methionine(out) + ATP + H2O = D-methionine(in) + ADP + phosphate + H(+). Part of the ABC transporter complex MetNIQ involved in methionine import. Responsible for energy coupling to the transport system. This is Methionine import ATP-binding protein MetN from Pasteurella multocida (strain Pm70).